Here is a 299-residue protein sequence, read N- to C-terminus: 4-hydroxy-tetrahydrodipicolinate synthase (299 aa).

Position 51 (threonine 51) interacts with pyruvate. Tyrosine 139 (proton donor/acceptor) is an active-site residue. Lysine 167 serves as the catalytic Schiff-base intermediate with substrate. Isoleucine 209 is a binding site for pyruvate.

The protein belongs to the DapA family. Homotetramer; dimer of dimers.

The protein localises to the cytoplasm. The catalysed reaction is L-aspartate 4-semialdehyde + pyruvate = (2S,4S)-4-hydroxy-2,3,4,5-tetrahydrodipicolinate + H2O + H(+). It participates in amino-acid biosynthesis; L-lysine biosynthesis via DAP pathway; (S)-tetrahydrodipicolinate from L-aspartate: step 3/4. Its function is as follows. Catalyzes the condensation of (S)-aspartate-beta-semialdehyde [(S)-ASA] and pyruvate to 4-hydroxy-tetrahydrodipicolinate (HTPA). The protein is 4-hydroxy-tetrahydrodipicolinate synthase of Methylobacterium radiotolerans (strain ATCC 27329 / DSM 1819 / JCM 2831 / NBRC 15690 / NCIMB 10815 / 0-1).